Here is a 181-residue protein sequence, read N- to C-terminus: Large ribosomal subunit protein uL10 (181 aa).

Belongs to the universal ribosomal protein uL10 family. In terms of assembly, part of the ribosomal stalk of the 50S ribosomal subunit. The N-terminus interacts with L11 and the large rRNA to form the base of the stalk. The C-terminus forms an elongated spine to which L12 dimers bind in a sequential fashion forming a multimeric L10(L12)X complex.

Its function is as follows. Forms part of the ribosomal stalk, playing a central role in the interaction of the ribosome with GTP-bound translation factors. The sequence is that of Large ribosomal subunit protein uL10 from Fervidobacterium nodosum (strain ATCC 35602 / DSM 5306 / Rt17-B1).